The chain runs to 181 residues: Der GTPase-activating protein YihI (181 aa).

2 disordered regions span residues Met-1–Pro-75 and Glu-145–Gly-181. The segment covering Arg-32–Leu-43 has biased composition (basic residues). Acidic residues predominate over residues Pro-146–Glu-155. Basic and acidic residues predominate over residues Ala-156–Asp-165. Residues Asp-166–Gly-181 are compositionally biased toward acidic residues.

This sequence belongs to the YihI family. Interacts with Der.

Functionally, a GTPase-activating protein (GAP) that modifies Der/EngA GTPase function. May play a role in ribosome biogenesis. The polypeptide is Der GTPase-activating protein YihI (Vibrio vulnificus (strain CMCP6)).